Reading from the N-terminus, the 87-residue chain is Glutaredoxin (87 aa).

In terms of domain architecture, Glutaredoxin spans M1 to D87. C11 and C14 form a disulfide bridge.

This sequence belongs to the glutaredoxin family. Monomer.

The protein localises to the cytoplasm. In terms of biological role, has a glutathione-disulfide oxidoreductase activity in the presence of NADPH and glutathione reductase. Reduces low molecular weight disulfides and proteins. The chain is Glutaredoxin (grx) from Vibrio cholerae serotype O1 (strain ATCC 39315 / El Tor Inaba N16961).